The sequence spans 145 residues: Large ribosomal subunit protein uL15 (145 aa).

The tract at residues 1–50 is disordered; the sequence is MLHTIKPVTNARKSTKRLGRGPGSGTGKTSGKGHKGQLARSGKTLRPGFE. The segment covering 20–30 has biased composition (gly residues); the sequence is RGPGSGTGKTS.

Belongs to the universal ribosomal protein uL15 family. Part of the 50S ribosomal subunit.

In terms of biological role, binds to the 23S rRNA. This is Large ribosomal subunit protein uL15 from Aster yellows witches'-broom phytoplasma (strain AYWB).